Here is a 560-residue protein sequence, read N- to C-terminus: Nucleoprotein (560 aa).

The binding site for the cap structure m7GTP stretch occupies residues 53-236 (MRKDKRTDTD…ITQEQSQINV (184 aa)). Residues 333–353 (LTDTGSPNHPPVRNGGSPRLS) form a disordered region. Mn(2+) contacts are provided by Asp-379 and Glu-381. 4 residues coordinate Zn(2+): Glu-389, Cys-496, His-499, and Cys-520. Asp-524 contacts Mn(2+).

This sequence belongs to the arenaviridae nucleocapsid protein family. As to quaternary structure, homomultimerizes to form the nucleocapsid. Binds to viral genomic RNA. Interacts with glycoprotein G2. Interacts with protein Z; this interaction probably directs the encapsidated genome to budding sites. Interacts with protein L; this interaction does not interfere with Z-L interaction. Interacts with host IKBKE (via Protein kinase domain); the interaction inhibits IKBKE kinase activity.

The protein resides in the virion. It localises to the host cytoplasm. Encapsidates the genome, protecting it from nucleases. The encapsidated genomic RNA is termed the nucleocapsid (NC). Serves as template for viral transcription and replication. The increased presence of protein N in host cell does not seem to trigger the switch from transcription to replication as observed in other negative strain RNA viruses. Through the interaction with host IKBKE, strongly inhibits the phosphorylation and nuclear translocation of host IRF3, a protein involved in interferon activation pathway, leading to the inhibition of interferon-beta and IRF3-dependent promoters activation. Also encodes a functional 3'-5' exoribonuclease that degrades preferentially dsRNA substrates and thereby participates in the suppression of interferon induction. This chain is Nucleoprotein, found in Pirital mammarenavirus (isolate Rat/Venezuela/VAV-488/1995) (PIRV).